The chain runs to 377 residues: Nitric oxide reductase FlRd-NAD(+) reductase (377 aa).

It belongs to the FAD-dependent oxidoreductase family. The cofactor is FAD.

It localises to the cytoplasm. The catalysed reaction is 2 reduced [nitric oxide reductase rubredoxin domain] + NAD(+) + H(+) = 2 oxidized [nitric oxide reductase rubredoxin domain] + NADH. It functions in the pathway nitrogen metabolism; nitric oxide reduction. Its function is as follows. One of at least two accessory proteins for anaerobic nitric oxide (NO) reductase. Reduces the rubredoxin moiety of NO reductase. In Escherichia coli O6:K15:H31 (strain 536 / UPEC), this protein is Nitric oxide reductase FlRd-NAD(+) reductase.